We begin with the raw amino-acid sequence, 238 residues long: MLGSPCLLWLLAVTFLVPRAQPLAPQDFEEEEADETETAWPPLPAVPCDYDHCRHLQVPCKELQRVGPAACLCPGLSSPAQPPDPPRMGEVRIAAEEGRAVVHWCAPFSPVLHYWLLLWDGSEAAQKGPPLNATVRRAELKGLKPGGIYVVCVVAANEAGASRVPQAGGEGLEGADIPAFGPCSRLAVPPNPRTLVHAAVGVGTALALLSCAALVWHFCLRDRWGCPRRAAARAAGAL.

The first 22 residues, 1–22, serve as a signal peptide directing secretion; that stretch reads MLGSPCLLWLLAVTFLVPRAQP. Residues 23–194 are Extracellular-facing; that stretch reads LAPQDFEEEE…RLAVPPNPRT (172 aa). A Fibronectin type-III domain is found at 82–176; the sequence is PPDPPRMGEV…AGGEGLEGAD (95 aa). Residue asparagine 132 is glycosylated (N-linked (GlcNAc...) asparagine). A helical transmembrane segment spans residues 195–215; that stretch reads LVHAAVGVGTALALLSCAALV. At 216–238 the chain is on the cytoplasmic side; it reads WHFCLRDRWGCPRRAAARAAGAL.

Its subcellular location is the membrane. This chain is LRRN4 C-terminal-like protein (LRRN4CL), found in Homo sapiens (Human).